We begin with the raw amino-acid sequence, 465 residues long: MLDDRARMEATKKEKVEQILAEFQLQEEDLKKVMSRMQKEMDRGLRLETHEEASVKMLPTYVRSTPEGSEVGDFLSLDLGGTNFRVMLVKVGEGEAGQWSVKTKHQMYSIPEDAMTGTAEMLFDYISECISDFLDKHQMKHKKLPLGFTFSFPVRHEDLDKGILLNWTKGFKASGAEGNNIVGLLRDAIKRRGDFEMDVVAMVNDTVATMISCYYEDRQCEVGMIVGTGCNACYMEEMQNVELVEGDEGRMCVNTEWGAFGDSGELDEFLLEYDRMVDESSANPGQQLYEKIIGGKYMGELVRLVLLKLVDENLLFHGEASEQLRTRGAFETRFVSQVESDSGDRKQIHNILSTLGLRPSVTDCDIVRRACESVSTRAAHMCSAGLAGVINRMRESRSEDVMRITVGVDGSVYKLHPSFKERFHASVRRLTPNCEITFIESEEGSGRGAALVSAVACKKACMLAQ.

The Hexokinase domain occupies 10 to 454 (ATKKEKVEQI…SGRGAALVSA (445 aa)). Residues 67 to 203 (EGSEVGDFLS…DFEMDVVAMV (137 aa)) are hexokinase small subdomain. ATP is bound at residue 78–83 (DLGGTN). Residues 151–152 (SF), 168–169 (TK), and 204–205 (ND) each bind substrate. Positions 204-443 (NDTVATMISC…CEITFIESEE (240 aa)) are hexokinase large subdomain. Thr-228 is an ATP binding site. Asn-231, Glu-256, and Glu-290 together coordinate substrate. Residues 295–296 (GK), 332–336 (TRFVS), and 411–415 (SVYKL) contribute to the ATP site.

This sequence belongs to the hexokinase family. As to quaternary structure, monomer. Interacts with MIDN; the interaction occurs preferentially at low glucose levels and results in inhibition of hexokinase activity. Interacts with GCKR; leading to sequestration in the nucleus. In terms of tissue distribution, expression is restricted to the liver and pancreatic islets (at protein level).

Its subcellular location is the cytoplasm. It localises to the nucleus. It is found in the mitochondrion. It catalyses the reaction a D-hexose + ATP = a D-hexose 6-phosphate + ADP + H(+). The catalysed reaction is D-fructose + ATP = D-fructose 6-phosphate + ADP + H(+). It carries out the reaction D-glucose + ATP = D-glucose 6-phosphate + ADP + H(+). The enzyme catalyses D-mannose + ATP = D-mannose 6-phosphate + ADP + H(+). It participates in carbohydrate metabolism; hexose metabolism. It functions in the pathway carbohydrate degradation; glycolysis; D-glyceraldehyde 3-phosphate and glycerone phosphate from D-glucose: step 1/4. With respect to regulation, subject to allosteric regulation. Low glucose and high fructose-6-phosphate triggers association with the inhibitor GCKR followed by sequestration in the nucleus. Functionally, catalyzes the phosphorylation of hexose, such as D-glucose, D-fructose and D-mannose, to hexose 6-phosphate (D-glucose 6-phosphate, D-fructose 6-phosphate and D-mannose 6-phosphate, respectively). Compared to other hexokinases, has a weak affinity for D-glucose, and is effective only when glucose is abundant. Mainly expressed in pancreatic beta cells and the liver and constitutes a rate-limiting step in glucose metabolism in these tissues. Since insulin secretion parallels glucose metabolism and the low glucose affinity of GCK ensures that it can change its enzymatic activity within the physiological range of glucose concentrations, GCK acts as a glucose sensor in the pancreatic beta cell. In pancreas, plays an important role in modulating insulin secretion. In liver, helps to facilitate the uptake and conversion of glucose by acting as an insulin-sensitive determinant of hepatic glucose usage. Required to provide D-glucose 6-phosphate for the synthesis of glycogen. Mediates the initial step of glycolysis by catalyzing phosphorylation of D-glucose to D-glucose 6-phosphate. In Rattus norvegicus (Rat), this protein is Hexokinase-4.